A 284-amino-acid chain; its full sequence is tRNA-splicing endonuclease (284 aa).

Residues Tyr222, His229, and Lys257 contribute to the active site.

It belongs to the tRNA-intron endonuclease family. Archaeal long subfamily. In terms of assembly, homodimer.

It carries out the reaction pretRNA = a 3'-half-tRNA molecule with a 5'-OH end + a 5'-half-tRNA molecule with a 2',3'-cyclic phosphate end + an intron with a 2',3'-cyclic phosphate and a 5'-hydroxyl terminus.. Endonuclease that removes tRNA introns. Cleaves pre-tRNA at the 5'- and 3'-splice sites to release the intron. The products are an intron and two tRNA half-molecules bearing 2',3' cyclic phosphate and 5'-OH termini. Recognizes a pseudosymmetric substrate in which 2 bulged loops of 3 bases are separated by a stem of 4 bp. The chain is tRNA-splicing endonuclease from Picrophilus torridus (strain ATCC 700027 / DSM 9790 / JCM 10055 / NBRC 100828 / KAW 2/3).